The following is a 179-amino-acid chain: Probable F-box protein At3g25550 (179 aa).

Residues 19–55 (IPNDDVLEEIIVRLPVKTLTRFQTVSKHWRHTIKSRN) enclose the F-box domain.

This Arabidopsis thaliana (Mouse-ear cress) protein is Probable F-box protein At3g25550.